The sequence spans 393 residues: Phosphoglycerate kinase (393 aa).

Substrate contacts are provided by residues 21 to 23 (DLN), Arg36, 59 to 62 (HLGR), Arg114, and Arg147. ATP-binding positions include Lys198, Glu314, and 340 to 343 (GGDT).

Belongs to the phosphoglycerate kinase family. In terms of assembly, monomer.

The protein localises to the cytoplasm. It catalyses the reaction (2R)-3-phosphoglycerate + ATP = (2R)-3-phospho-glyceroyl phosphate + ADP. The protein operates within carbohydrate degradation; glycolysis; pyruvate from D-glyceraldehyde 3-phosphate: step 2/5. This Buchnera aphidicola subsp. Baizongia pistaciae (strain Bp) protein is Phosphoglycerate kinase.